The following is a 614-amino-acid chain: Chaperone protein DnaK (614 aa).

Threonine 173 is modified (phosphothreonine; by autocatalysis). Basic and acidic residues-rich tracts occupy residues 490–509 (EENA…RNEA) and 529–542 (EEDK…KEAL). Disordered stretches follow at residues 490 to 510 (EENA…NEAD), 524 to 555 (GENI…DDIK), and 575 to 614 (QAAQ…DNQK). Low complexity predominate over residues 575-584 (QAAQAQQQAQ). Over residues 599 to 614 (ADFKEVKDDDNQDNQK) the composition is skewed to basic and acidic residues.

The protein belongs to the heat shock protein 70 family.

Its function is as follows. Acts as a chaperone. The chain is Chaperone protein DnaK from Staphylococcus saprophyticus subsp. saprophyticus (strain ATCC 15305 / DSM 20229 / NCIMB 8711 / NCTC 7292 / S-41).